Here is a 164-residue protein sequence, read N- to C-terminus: ATP synthase subunit b 1 (164 aa).

Residues 8–28 form a helical membrane-spanning segment; that stretch reads AETWVAVGFAILMVVFVYFGV.

The protein belongs to the ATPase B chain family. In terms of assembly, F-type ATPases have 2 components, F(1) - the catalytic core - and F(0) - the membrane proton channel. F(1) has five subunits: alpha(3), beta(3), gamma(1), delta(1), epsilon(1). F(0) has three main subunits: a(1), b(2) and c(10-14). The alpha and beta chains form an alternating ring which encloses part of the gamma chain. F(1) is attached to F(0) by a central stalk formed by the gamma and epsilon chains, while a peripheral stalk is formed by the delta and b chains.

The protein localises to the cell inner membrane. In terms of biological role, f(1)F(0) ATP synthase produces ATP from ADP in the presence of a proton or sodium gradient. F-type ATPases consist of two structural domains, F(1) containing the extramembraneous catalytic core and F(0) containing the membrane proton channel, linked together by a central stalk and a peripheral stalk. During catalysis, ATP synthesis in the catalytic domain of F(1) is coupled via a rotary mechanism of the central stalk subunits to proton translocation. Functionally, component of the F(0) channel, it forms part of the peripheral stalk, linking F(1) to F(0). The sequence is that of ATP synthase subunit b 1 from Rhodopseudomonas palustris (strain BisA53).